A 677-amino-acid polypeptide reads, in one-letter code: Methionine--tRNA ligase (677 aa).

Residues 15–25 (PYANGSIHLGH) carry the 'HIGH' region motif. Residues Cys146, Cys149, Cys159, and Cys162 each contribute to the Zn(2+) site. Positions 333–337 (KMSKS) match the 'KMSKS' region motif. Lys336 is an ATP binding site. The 103-residue stretch at 575–677 (DFAKVDLRVA…AGAKPGHQVK (103 aa)) folds into the tRNA-binding domain.

This sequence belongs to the class-I aminoacyl-tRNA synthetase family. MetG type 1 subfamily. In terms of assembly, homodimer. Requires Zn(2+) as cofactor.

It localises to the cytoplasm. The enzyme catalyses tRNA(Met) + L-methionine + ATP = L-methionyl-tRNA(Met) + AMP + diphosphate. Is required not only for elongation of protein synthesis but also for the initiation of all mRNA translation through initiator tRNA(fMet) aminoacylation. The sequence is that of Methionine--tRNA ligase from Escherichia coli O127:H6 (strain E2348/69 / EPEC).